The primary structure comprises 302 residues: Ectoine dioxygenase (302 aa).

Glutamine 128 is a binding site for L-ectoine. Lysine 134 is a binding site for 2-oxoglutarate. Fe cation contacts are provided by histidine 145, aspartate 147, and histidine 246.

The protein belongs to the PhyH family. EctD subfamily. Homodimer. It depends on Fe(2+) as a cofactor.

It carries out the reaction L-ectoine + 2-oxoglutarate + O2 = 5-hydroxyectoine + succinate + CO2. Its function is as follows. Involved in the biosynthesis of 5-hydroxyectoine, called compatible solute, which helps organisms to survive extreme osmotic stress by acting as a highly soluble organic osmolyte. Catalyzes the 2-oxoglutarate-dependent selective hydroxylation of L-ectoine to yield (4S,5S)-5-hydroxyectoine. In Stutzerimonas stutzeri (strain A1501) (Pseudomonas stutzeri), this protein is Ectoine dioxygenase.